A 365-amino-acid polypeptide reads, in one-letter code: METKKTLREGYTTGACATAATKAALTALITGIIQTEATIYLPVGRWATFAIEACEIYGESVKATVIKDGGDDPDATHGAAIVSTVSWAEQPGIHLDGGKGVGRVTKPGLPVPVGEAAINPIPRKMIHETAREVLEQYGISRGVNVIISVPNGEEIAKKTLNARLGIIGGISILGTRGIVIPFSTSAYRASIIQAIQVAKANGCDHVVITTGGRSEKFAMRQYPHLPEEAFIEMGDFVGFTLKQCKRLGIRTVSMVGMMGKFSKVAQGIMMVHSKSAPIDFSFLAAIAEQAGASPELVAAVREANTASQVGEMMQEAGNERFFEILCDHCCLSALREVGGGMTVETSLYTMGGQLLGKAVRNDAGD.

It belongs to the CbiD family.

It carries out the reaction Co-precorrin-5B + S-adenosyl-L-methionine = Co-precorrin-6A + S-adenosyl-L-homocysteine. The protein operates within cofactor biosynthesis; adenosylcobalamin biosynthesis; cob(II)yrinate a,c-diamide from sirohydrochlorin (anaerobic route): step 6/10. Catalyzes the methylation of C-1 in cobalt-precorrin-5B to form cobalt-precorrin-6A. The polypeptide is Cobalt-precorrin-5B C(1)-methyltransferase (Geobacillus sp. (strain WCH70)).